A 408-amino-acid chain; its full sequence is Peptidase T (408 aa).

Residue His-79 participates in Zn(2+) binding. The active site involves Asp-81. Residue Asp-139 participates in Zn(2+) binding. Glu-173 functions as the Proton acceptor in the catalytic mechanism. Positions 174, 196, and 378 each coordinate Zn(2+).

This sequence belongs to the peptidase M20B family. Zn(2+) serves as cofactor.

Its subcellular location is the cytoplasm. The enzyme catalyses Release of the N-terminal residue from a tripeptide.. In terms of biological role, cleaves the N-terminal amino acid of tripeptides. This Shouchella clausii (strain KSM-K16) (Alkalihalobacillus clausii) protein is Peptidase T.